The primary structure comprises 605 residues: Isocitrate dehydrogenase kinase/phosphatase (605 aa).

ATP contacts are provided by residues 327–333 (APGIKGL) and lysine 348. Aspartate 383 is a catalytic residue.

It belongs to the AceK family.

It is found in the cytoplasm. It catalyses the reaction L-seryl-[isocitrate dehydrogenase] + ATP = O-phospho-L-seryl-[isocitrate dehydrogenase] + ADP + H(+). Its function is as follows. Bifunctional enzyme which can phosphorylate or dephosphorylate isocitrate dehydrogenase (IDH) on a specific serine residue. This is a regulatory mechanism which enables bacteria to bypass the Krebs cycle via the glyoxylate shunt in response to the source of carbon. When bacteria are grown on glucose, IDH is fully active and unphosphorylated, but when grown on acetate or ethanol, the activity of IDH declines drastically concomitant with its phosphorylation. This chain is Isocitrate dehydrogenase kinase/phosphatase, found in Burkholderia multivorans (strain ATCC 17616 / 249).